Consider the following 344-residue polypeptide: L-threonine 3-dehydrogenase (344 aa).

Cysteine 42 provides a ligand contact to Zn(2+). Residues threonine 44 and histidine 47 each act as charge relay system in the active site. 6 residues coordinate Zn(2+): histidine 67, glutamate 68, cysteine 97, cysteine 100, cysteine 103, and cysteine 111. NAD(+) contacts are provided by residues isoleucine 179, aspartate 199, arginine 204, 266 to 268 (LGI), and 290 to 291 (IY).

Belongs to the zinc-containing alcohol dehydrogenase family. In terms of assembly, homotetramer. The cofactor is Zn(2+).

The protein resides in the cytoplasm. The catalysed reaction is L-threonine + NAD(+) = (2S)-2-amino-3-oxobutanoate + NADH + H(+). It functions in the pathway amino-acid degradation; L-threonine degradation via oxydo-reductase pathway; glycine from L-threonine: step 1/2. In terms of biological role, catalyzes the NAD(+)-dependent oxidation of L-threonine to 2-amino-3-ketobutyrate. The polypeptide is L-threonine 3-dehydrogenase (Sinorhizobium medicae (strain WSM419) (Ensifer medicae)).